We begin with the raw amino-acid sequence, 502 residues long: Probable cytosol aminopeptidase (502 aa).

Residues Lys-270 and Asp-275 each contribute to the Mn(2+) site. The active site involves Lys-282. Mn(2+)-binding residues include Asp-293, Asp-352, and Glu-354. Arg-356 is a catalytic residue.

Belongs to the peptidase M17 family. The cofactor is Mn(2+).

Its subcellular location is the cytoplasm. The enzyme catalyses Release of an N-terminal amino acid, Xaa-|-Yaa-, in which Xaa is preferably Leu, but may be other amino acids including Pro although not Arg or Lys, and Yaa may be Pro. Amino acid amides and methyl esters are also readily hydrolyzed, but rates on arylamides are exceedingly low.. It carries out the reaction Release of an N-terminal amino acid, preferentially leucine, but not glutamic or aspartic acids.. Functionally, presumably involved in the processing and regular turnover of intracellular proteins. Catalyzes the removal of unsubstituted N-terminal amino acids from various peptides. This Buchnera aphidicola subsp. Schizaphis graminum (strain Sg) protein is Probable cytosol aminopeptidase.